The following is a 278-amino-acid chain: MKNWKFNKINYPTFEKSGAIPRSITKTFEKLKKELNPHSESEIIEEFTISRYQTIASLRYLIVLVVFPVVVHQVSKNFIIGPAVDYFWKYNQIDVFLNSSQEERAFAELQRFEEKIHFEMLIGTKQSVSQQSLEASIKQKAVEIADHYTYESLHAIKNILADSISISVFILLIVLGKRQTFVLKSFLNEIVYGLSDTAKAFLIILFTDMFIGFHSPHGWEVVIESLLRHFGLPENRDFIFLFIATFPVSLDTVFKYWIFRYLNQVSPSAVATYHNMNE.

4 consecutive transmembrane segments (helical) span residues 61 to 81, 155 to 175, 203 to 223, and 238 to 258; these read LIVLVVFPVVVHQVSKNFIIG, AIKNILADSISISVFILLIVL, IILFTDMFIGFHSPHGWEVVI, and FIFLFIATFPVSLDTVFKYWI.

It belongs to the CemA family.

The protein localises to the plastid. The protein resides in the chloroplast inner membrane. The catalysed reaction is K(+)(in) + H(+)(out) = K(+)(out) + H(+)(in). In terms of biological role, contributes to K(+)/H(+) antiport activity by supporting proton efflux to control proton extrusion and homeostasis in chloroplasts in a light-dependent manner to modulate photosynthesis. Prevents excessive induction of non-photochemical quenching (NPQ) under continuous-light conditions. Indirectly promotes efficient inorganic carbon uptake into chloroplasts. The chain is Potassium/proton antiporter CemA from Cyanidium caldarium (Red alga).